We begin with the raw amino-acid sequence, 503 residues long: Annexin A11 (503 aa).

Pro residues-rich tracts occupy residues 80 to 117 and 123 to 167; these read GYPP…PGMP and PGAP…PVPS. Residues 80–172 form a disordered region; that stretch reads GYPPVPPGGF…QPVPSYPGYS (93 aa). Annexin repeat units lie at residues 198 to 269, 270 to 341, 353 to 425, and 429 to 500; these read FDPL…ALMK, TPVL…SLSQ, SLVQ…AVVK, and NTPA…KICG. Residues lysine 246 and lysine 253 each carry the N6-acetyllysine modification. At lysine 477 the chain carries N6-acetyllysine.

It belongs to the annexin family. In terms of assembly, interacts with S100A6. Interacts with PDCD6 in a calcium-dependent manner. Interacts with KIF23 during cytokinesis.

It is found in the cytoplasm. The protein localises to the melanosome. It localises to the nucleus envelope. The protein resides in the nucleus. Its subcellular location is the nucleoplasm. It is found in the cytoskeleton. The protein localises to the spindle. Functionally, required for midbody formation and completion of the terminal phase of cytokinesis. Binds specifically to calcyclin in a calcium-dependent manner. The sequence is that of Annexin A11 (Anxa11) from Mus musculus (Mouse).